We begin with the raw amino-acid sequence, 340 residues long: DNA-directed RNA polymerase subunit alpha (340 aa).

An alpha N-terminal domain (alpha-NTD) region spans residues 1 to 233; it reads MYRNWRDLIS…EQLSIFINFD (233 aa). The interval 251 to 340 is alpha C-terminal domain (alpha-CTD); sequence INENLYRSVD…RLRGERKDEE (90 aa).

This sequence belongs to the RNA polymerase alpha chain family. As to quaternary structure, homodimer. The RNAP catalytic core consists of 2 alpha, 1 beta, 1 beta' and 1 omega subunit. When a sigma factor is associated with the core the holoenzyme is formed, which can initiate transcription.

The enzyme catalyses RNA(n) + a ribonucleoside 5'-triphosphate = RNA(n+1) + diphosphate. Its function is as follows. DNA-dependent RNA polymerase catalyzes the transcription of DNA into RNA using the four ribonucleoside triphosphates as substrates. This Geobacter sulfurreducens (strain ATCC 51573 / DSM 12127 / PCA) protein is DNA-directed RNA polymerase subunit alpha.